The chain runs to 867 residues: Putative RNA-directed RNA polymerase (867 aa).

One can recognise a RdRp catalytic domain in the interval 561–676 (PVAIGVDASR…ITDRANEKLF (116 aa)).

This sequence belongs to the luteoviruses RNA polymerase family.

It carries out the reaction RNA(n) + a ribonucleoside 5'-triphosphate = RNA(n+1) + diphosphate. Its function is as follows. Probable polymerase. The protein is Putative RNA-directed RNA polymerase of Avena byzantina (Oat).